The sequence spans 264 residues: Thiazole synthase (264 aa).

Lys-106 (schiff-base intermediate with DXP) is an active-site residue. Residues Gly-167, 193 to 194, and 215 to 216 each bind 1-deoxy-D-xylulose 5-phosphate; these read AG and NT.

It belongs to the ThiG family. In terms of assembly, homotetramer. Forms heterodimers with either ThiH or ThiS.

It is found in the cytoplasm. It carries out the reaction [ThiS sulfur-carrier protein]-C-terminal-Gly-aminoethanethioate + 2-iminoacetate + 1-deoxy-D-xylulose 5-phosphate = [ThiS sulfur-carrier protein]-C-terminal Gly-Gly + 2-[(2R,5Z)-2-carboxy-4-methylthiazol-5(2H)-ylidene]ethyl phosphate + 2 H2O + H(+). It participates in cofactor biosynthesis; thiamine diphosphate biosynthesis. In terms of biological role, catalyzes the rearrangement of 1-deoxy-D-xylulose 5-phosphate (DXP) to produce the thiazole phosphate moiety of thiamine. Sulfur is provided by the thiocarboxylate moiety of the carrier protein ThiS. In vitro, sulfur can be provided by H(2)S. The protein is Thiazole synthase of Stenotrophomonas maltophilia (strain K279a).